A 142-amino-acid polypeptide reads, in one-letter code: Large ribosomal subunit protein uL13 (142 aa).

This sequence belongs to the universal ribosomal protein uL13 family. As to quaternary structure, part of the 50S ribosomal subunit.

In terms of biological role, this protein is one of the early assembly proteins of the 50S ribosomal subunit, although it is not seen to bind rRNA by itself. It is important during the early stages of 50S assembly. This chain is Large ribosomal subunit protein uL13, found in Yersinia pseudotuberculosis serotype O:1b (strain IP 31758).